We begin with the raw amino-acid sequence, 53 residues long: UPF0391 membrane protein YPTS_0599 (53 aa).

Transmembrane regions (helical) follow at residues 4-24 (WGII…GGLA) and 27-47 (AAWA…ISLF).

Belongs to the UPF0391 family.

It localises to the cell membrane. The chain is UPF0391 membrane protein YPTS_0599 from Yersinia pseudotuberculosis serotype IB (strain PB1/+).